Reading from the N-terminus, the 372-residue chain is DNA polymerase delta subunit 3 (372 aa).

Disordered regions lie at residues 156-264 (KKAP…NLDS) and 352-372 (KKNT…FGKK). The segment covering 160 to 173 (STHSPQLSVPSKTS) has biased composition (polar residues). Residue Ser163 is modified to Phosphoserine. 2 stretches are compositionally biased toward basic and acidic residues: residues 174–190 (TIDK…KGKD) and 209–239 (APLE…DDLK). The segment covering 355-365 (TAQSKPQQKSI) has biased composition (polar residues).

Heterotetramer that consist of the pol3, cdc1, cdc27 and cdm1 subunits. Cdc27 interacts with cdc1 and is required for dimerization of the tetramer.

Its subcellular location is the nucleus. This is DNA polymerase delta subunit 3 (cdc27) from Schizosaccharomyces pombe (strain 972 / ATCC 24843) (Fission yeast).